Consider the following 335-residue polypeptide: NADH-quinone oxidoreductase subunit H (335 aa).

A run of 8 helical transmembrane segments spans residues 11-31 (VILT…CGAL), 81-101 (MIFT…FVVI), 114-134 (IGLL…LFAG), 154-174 (VSYE…VGSF), 187-207 (LWFI…GVAV), 238-258 (FFVG…TLFF), 270-290 (QVPF…FILL), and 307-327 (WKFC…VVLY).

This sequence belongs to the complex I subunit 1 family. In terms of assembly, NDH-1 is composed of 13 different subunits. Subunits NuoA, H, J, K, L, M, N constitute the membrane sector of the complex.

The protein localises to the cell inner membrane. The enzyme catalyses a quinone + NADH + 5 H(+)(in) = a quinol + NAD(+) + 4 H(+)(out). Its function is as follows. NDH-1 shuttles electrons from NADH, via FMN and iron-sulfur (Fe-S) centers, to quinones in the respiratory chain. The immediate electron acceptor for the enzyme in this species is believed to be ubiquinone. Couples the redox reaction to proton translocation (for every two electrons transferred, four hydrogen ions are translocated across the cytoplasmic membrane), and thus conserves the redox energy in a proton gradient. This subunit may bind ubiquinone. The sequence is that of NADH-quinone oxidoreductase subunit H from Pseudomonas entomophila (strain L48).